Consider the following 87-residue polypeptide: uncharacterized protein (87 aa).

One can recognise a 2Fe-2S ferredoxin-type domain in the interval 4–87; sequence SKIIILNNNK…TISGSILIKI (84 aa). Positions 39, 44, 47, and 75 each coordinate [2Fe-2S] cluster.

[2Fe-2S] cluster serves as cofactor.

This is an uncharacterized protein from Buchnera aphidicola subsp. Baizongia pistaciae (strain Bp).